The primary structure comprises 365 residues: Fatty acid hydroxylase vlmA (365 aa).

The segment at 20-41 is disordered; the sequence is TTIKRRQNDKTKTPKTKPVSKI. An N-linked (GlcNAc...) asparagine glycan is attached at asparagine 47. 4 consecutive transmembrane segments (helical) span residues 62–82, 89–109, 144–164, and 179–199; these read ILLQSLLPITVHQLTTLVLSI, VHPFLLRLCVIIGYGYAFRFL, LNWSLPLTVGSRTVMCVLVAY, and WWAWLAVYLSLYPIILDFYYY. Residues 189 to 335 form the Fatty acid hydroxylase domain; the sequence is LYPIILDFYY…TRIWDRLFGT (147 aa).

It belongs to the sterol desaturase family. TMEM195 subfamily.

It localises to the membrane. The protein operates within secondary metabolite biosynthesis. In terms of biological role, fatty acid hydroxylase; part of the gene cluster that mediates the biosynthesis of verlamelin, a lipopeptide that exhibits antifungal activity against plant pathogenic fungi. Verlamelin is a cyclic hexadepsipeptide and is bridged by ester bonding between a 5-hydroxytetradecanoic acid moiety and a carboxyl group on the terminal Val of amide-bonded tetradecanoyl-hexapeptide D-allo-Thr-D-Ala-L-Pro-L-Gln-D-Tyr-L-Val. VlmA and vlmB are altogether regarded as essential components in the biosynthesis of 5-hydroxytetradecanoic acid. VlmA catalyzes the hydroxylation at position C5 of tetradecanoic acid produced in primary metabolism, while the precise function of vlmB still remains to be solved. To be loaded onto the waiting NRPS, 5-hydroxytetradecanoic acid is activated in the form of acyladenylate by the AMP-dependent ligase vlmC. VlmS seems to accept the fatty-acyl intermediate onto the initial module to further elongate amino acid residues by the downstream modules. In addition, in the last module at its C-terminus, vlmS contains a surplus condensation (C) domain that may be involved in cyclization, the last step to form verlamelin. The polypeptide is Fatty acid hydroxylase vlmA (Lecanicillium sp).